Reading from the N-terminus, the 414-residue chain is Serine hydroxymethyltransferase (414 aa).

Residues L121 and 125-127 (GHL) contribute to the (6S)-5,6,7,8-tetrahydrofolate site. N6-(pyridoxal phosphate)lysine is present on K229.

It belongs to the SHMT family. As to quaternary structure, homodimer. Pyridoxal 5'-phosphate is required as a cofactor.

Its subcellular location is the cytoplasm. It carries out the reaction (6R)-5,10-methylene-5,6,7,8-tetrahydrofolate + glycine + H2O = (6S)-5,6,7,8-tetrahydrofolate + L-serine. The protein operates within one-carbon metabolism; tetrahydrofolate interconversion. It participates in amino-acid biosynthesis; glycine biosynthesis; glycine from L-serine: step 1/1. In terms of biological role, catalyzes the reversible interconversion of serine and glycine with tetrahydrofolate (THF) serving as the one-carbon carrier. This reaction serves as the major source of one-carbon groups required for the biosynthesis of purines, thymidylate, methionine, and other important biomolecules. Also exhibits THF-independent aldolase activity toward beta-hydroxyamino acids, producing glycine and aldehydes, via a retro-aldol mechanism. The sequence is that of Serine hydroxymethyltransferase from Polynucleobacter necessarius subsp. necessarius (strain STIR1).